Reading from the N-terminus, the 1411-residue chain is Tectonin beta-propeller repeat-containing protein 2 (1411 aa).

WD repeat units follow at residues 23–66, 67–114, 115–161, 162–203, 204–265, 266–309, and 310–343; these read IPTK…HLNQ, MRKY…PGRN, KQLR…LDQG, LCNS…EKSV, RQIG…AGGV, KPFE…EYSI, and YLLD…FFLK. 4 disordered regions span residues 379-439, 463-542, 579-637, and 758-779; these read QAEK…GSQP, VKRK…QENT, RELL…GPQS, and YAHG…PSCS. Low complexity predominate over residues 400-420; it reads SSVASEPRSRSSSLNSTDSGS. Composition is skewed to polar residues over residues 475–489, 496–542, 608–621, and 763–779; these read GSRS…STPC, SPQS…QENT, PNST…QDSS, and PSSS…PSCS. 6 TECPR repeats span residues 945–976, 994–1027, 1179–1209, 1226–1259, 1279–1310, and 1322–1353; these read NVVW…KCDI, QTLW…WQVS, DALW…TRLD, QHIW…IMIE, QMLW…EHVP, and RTVW…KKIP. Positions 1388–1411 are disordered; sequence HGTQKSSQAAMPHPEDLEDEWEVI.

Belongs to the WD repeat KIAA0329 family. In terms of assembly, interacts with the ATG8 family members GABARAP, GABARAPL1, GABARAPL2, MAP1LC3B and MAP1LC3C. In terms of tissue distribution, detected in skin fibroblast (at protein level).

Probably plays a role as positive regulator of autophagy. The chain is Tectonin beta-propeller repeat-containing protein 2 (TECPR2) from Homo sapiens (Human).